Here is a 316-residue protein sequence, read N- to C-terminus: Aprataxin (316 aa).

The FHA-like domain maps to 1 to 38; it reads HASARGEGFLLLKADCNKGYVTVKQIGVNPTSVDLVDV. A disordered region spans residues 104-142; the sequence is KKMEVVDTQSSSADLRPSKSSVSPHEGTTSRKEHLGHWS. Residues 110–130 are compositionally biased toward polar residues; sequence DTQSSSADLRPSKSSVSPHEG. In terms of domain architecture, HIT spans 142–247; sequence SQGLKSSMQD…ISQDFDSPAL (106 aa). 2 interaction with DNA substrate regions span residues 167–171 and 229–230; these read DKYPK and SM. Positions 232 to 236 match the Histidine triad motif motif; that stretch reads QLHLH. Histidine 234 functions as the Tele-AMP-histidine intermediate in the catalytic mechanism. The C2H2-type zinc finger occupies 291-313; that stretch reads LRCHLCKQQLSTIPQLKEHLKKH.

It localises to the nucleus. The protein resides in the nucleoplasm. The protein localises to the nucleolus. It carries out the reaction a 5'-end adenosine-5'-diphospho-5'-2'-deoxyribonucleoside-DNA + H2O = a 5'-end 5'-phospho-2'-deoxyribonucleoside-DNA + AMP + 2 H(+). The catalysed reaction is a 5'-end adenosine-5'-diphospho-5'-ribonucleoside-2'-deoxyribonucleotide-DNA + H2O = a 5'-end 5'-phospho-ribonucleoside-2'-deoxyribonucleotide-DNA + AMP + 2 H(+). The enzyme catalyses a 3'-end 2'-deoxyribonucleotide-3'-diphospho-5'-guanosine-DNA + H2O = a 3'-end 2'-deoxyribonucleotide 3'-phosphate-DNA + GMP + 2 H(+). Functionally, DNA-binding protein involved in single-strand DNA break repair, double-strand DNA break repair and base excision repair. Resolves abortive DNA ligation intermediates formed either at base excision sites, or when DNA ligases attempt to repair non-ligatable breaks induced by reactive oxygen species. Catalyzes the release of adenylate groups covalently linked to 5'-phosphate termini, resulting in the production of 5'-phosphate termini that can be efficiently rejoined. Also able to hydrolyze adenosine 5'-monophosphoramidate (AMP-NH(2)) and diadenosine tetraphosphate (AppppA), but with lower catalytic activity. Likewise, catalyzes the release of 3'-linked guanosine (DNAppG) and inosine (DNAppI) from DNA, but has higher specific activity with 5'-linked adenosine (AppDNA). This Gallus gallus (Chicken) protein is Aprataxin (APTX).